The following is a 401-amino-acid chain: O-methyltransferase mfmE (401 aa).

S-adenosyl-L-methionine-binding positions include 243–244 (GG) and Asp-268. Catalysis depends on His-308, which acts as the Proton acceptor.

Belongs to the class I-like SAM-binding methyltransferase superfamily. Cation-independent O-methyltransferase family. COMT subfamily.

It participates in secondary metabolite biosynthesis; terpenoid biosynthesis. Functionally, O-methyltransferase; part of the gene cluster that mediates the biosynthesis of the phthalide-terpenoid hybrid 11'-O-desmethylfendlerol. Within the pathway, mfmE catalyzes the 7-O-methylation of the phthalide 5,7-dihydroxy-4-(hydroxymethyl)-6-methylphthalide to yield 5-hydroxy-4-(hydroxymethyl)-7-methoxy-6-methylphthalide. The biosynthesis of 11'-O-desmethylfendlerol begins with the NR-PKS mfmB that forms 3,5-dimethylorsellinic acid (DMOA), which is then transformed into the phthalide 5,7-dihydroxy-4-(hydroxymethyl)-6-methylphthalide by the cytochrome P450 monooxygenase mfmA and the hydrolase mfmC. Subsequently, the methyltransferase mfmE catalyzes 7-O-methylation to yield 5-hydroxy-4-(hydroxymethyl)-7-methoxy-6-methylphthalide, which undergoes C-3 hydroxylation by the cytochrome P450 monooxygenase mfmF. The resultant cyclopolic acid (2,5-dihydroxy-4-(hydroxymethyl)-7-methoxy-6-methylphthalide) is then farnesylated by the DMATS-type prenyltransferase mfmD to afford 5-O-farnesylcyclopolic acid. Finally, the Pyr4-family terpene cyclase mfmH cyclizes the farnesyl moiety of 5-O-farnesylcyclopolic acid into a drimane-like structure, thus completing the biosynthesis of 11'-O-desmethylfendlerol. This is O-methyltransferase mfmE from Annulohypoxylon moriforme (Filamentous fungus).